Consider the following 95-residue polypeptide: Beta-defensin 132 (95 aa).

Residues 1–22 (MKFLLLVLAALRFLTQVIPASA) form the signal peptide. 3 cysteine pairs are disulfide-bonded: Cys-27–Cys-55, Cys-35–Cys-49, and Cys-39–Cys-56. The interval 72-95 (GNHWQSRRRNTQRKDKKQQTTVTS) is disordered. Positions 76–87 (QSRRRNTQRKDK) are enriched in basic residues.

The protein belongs to the beta-defensin family.

Its subcellular location is the secreted. Its function is as follows. Has antibacterial activity. This is Beta-defensin 132 (DEFB132) from Pongo pygmaeus (Bornean orangutan).